The sequence spans 436 residues: Enolase (436 aa).

Gln167 lines the (2R)-2-phosphoglycerate pocket. Glu209 functions as the Proton donor in the catalytic mechanism. 3 residues coordinate Mg(2+): Asp246, Glu291, and Asp318. Residues Lys343, Arg372, Ser373, and Lys394 each coordinate (2R)-2-phosphoglycerate. Catalysis depends on Lys343, which acts as the Proton acceptor.

This sequence belongs to the enolase family. As to quaternary structure, component of the RNA degradosome, a multiprotein complex involved in RNA processing and mRNA degradation. Mg(2+) serves as cofactor.

It localises to the cytoplasm. The protein localises to the secreted. It is found in the cell surface. The enzyme catalyses (2R)-2-phosphoglycerate = phosphoenolpyruvate + H2O. The protein operates within carbohydrate degradation; glycolysis; pyruvate from D-glyceraldehyde 3-phosphate: step 4/5. Functionally, catalyzes the reversible conversion of 2-phosphoglycerate (2-PG) into phosphoenolpyruvate (PEP). It is essential for the degradation of carbohydrates via glycolysis. This Haemophilus influenzae (strain PittGG) protein is Enolase.